Here is a 528-residue protein sequence, read N- to C-terminus: Tyrosine--tRNA ligase, cytoplasmic (528 aa).

Tyr-39 is an L-tyrosine binding site. A 'HIGH' region motif is present at residues 44-52 (TTGKPHVAY). Tyr-166, Gln-170, Asp-173, and Gln-188 together coordinate L-tyrosine. The short motif at 222-226 (KMSSS) is the 'KMSKS' region element. Residues 242–247 (KKKLKK) carry the Nuclear localization signal motif. Residues 332-362 (EMKKLSNDAYPDASKQKSVPKGSTKNSGTEE) are disordered. The tRNA-binding domain maps to 364–468 (DPSLLDLRVG…SGSAPGERIY (105 aa)).

It belongs to the class-I aminoacyl-tRNA synthetase family. Homodimer.

The protein resides in the cytoplasm. It is found in the nucleus. It carries out the reaction tRNA(Tyr) + L-tyrosine + ATP = L-tyrosyl-tRNA(Tyr) + AMP + diphosphate + H(+). Catalyzes the attachment of tyrosine to tRNA(Tyr) in a two-step reaction: tyrosine is first activated by ATP to form Tyr-AMP and then transferred to the acceptor end of tRNA(Tyr). The polypeptide is Tyrosine--tRNA ligase, cytoplasmic (yars1) (Xenopus laevis (African clawed frog)).